Consider the following 305-residue polypeptide: Acyl transferase (305 aa).

Residues Ser116, Asp213, and His243 each act as charge relay system in the active site.

Belongs to the LuxD family.

It functions in the pathway lipid metabolism; fatty acid reduction for biolumincescence. Acyl transferase is part of the fatty acid reductase system required for aldehyde biosynthesis; it produces fatty acids for the luminescent reaction. This is Acyl transferase from Shewanella woodyi (strain ATCC 51908 / MS32).